Here is a 125-residue protein sequence, read N- to C-terminus: Fluoride-specific ion channel FluC (125 aa).

The next 4 helical transmembrane spans lie at 4-24 (LMLV…TVTA), 32-52 (AFPW…GLLV), 67-87 (LLLA…SLDV), and 100-120 (LAYV…GLWL). Gly75 and Thr78 together coordinate Na(+).

It belongs to the fluoride channel Fluc/FEX (TC 1.A.43) family.

Its subcellular location is the cell inner membrane. The enzyme catalyses fluoride(in) = fluoride(out). Its activity is regulated as follows. Na(+) is not transported, but it plays an essential structural role and its presence is essential for fluoride channel function. Functionally, fluoride-specific ion channel. Important for reducing fluoride concentration in the cell, thus reducing its toxicity. In Chelativorans sp. (strain BNC1), this protein is Fluoride-specific ion channel FluC.